The following is a 330-amino-acid chain: Aspartate--ammonia ligase (330 aa).

Belongs to the class-II aminoacyl-tRNA synthetase family. AsnA subfamily.

Its subcellular location is the cytoplasm. It catalyses the reaction L-aspartate + NH4(+) + ATP = L-asparagine + AMP + diphosphate + H(+). It functions in the pathway amino-acid biosynthesis; L-asparagine biosynthesis; L-asparagine from L-aspartate (ammonia route): step 1/1. The chain is Aspartate--ammonia ligase from Escherichia coli O81 (strain ED1a).